Here is a 504-residue protein sequence, read N- to C-terminus: Histidine--tRNA ligase (504 aa).

This sequence belongs to the class-II aminoacyl-tRNA synthetase family. As to quaternary structure, homodimer.

Its subcellular location is the cytoplasm. It catalyses the reaction tRNA(His) + L-histidine + ATP = L-histidyl-tRNA(His) + AMP + diphosphate + H(+). This Rhizobium meliloti (strain 1021) (Ensifer meliloti) protein is Histidine--tRNA ligase (hisS).